The chain runs to 377 residues: Homoserine O-succinyltransferase (377 aa).

One can recognise an AB hydrolase-1 domain in the interval 45–356; it reads NAVLVCHALN…PHGHDAFLLD (312 aa). Catalysis depends on S151, which acts as the Nucleophile. R221 contributes to the substrate binding site. Residues D317 and H350 contribute to the active site. D351 is a substrate binding site.

Belongs to the AB hydrolase superfamily. MetX family. As to quaternary structure, homodimer.

The protein localises to the cytoplasm. It catalyses the reaction L-homoserine + succinyl-CoA = O-succinyl-L-homoserine + CoA. It participates in amino-acid biosynthesis; L-methionine biosynthesis via de novo pathway; O-succinyl-L-homoserine from L-homoserine: step 1/1. Its function is as follows. Transfers a succinyl group from succinyl-CoA to L-homoserine, forming succinyl-L-homoserine. This Leptothrix cholodnii (strain ATCC 51168 / LMG 8142 / SP-6) (Leptothrix discophora (strain SP-6)) protein is Homoserine O-succinyltransferase.